The chain runs to 906 residues: Glutamate receptor 1 (906 aa).

The signal sequence occupies residues 1–18 (MQHIFAFFCTGFLGAVVG). The Extracellular portion of the chain corresponds to 19-536 (ANFPNNIQIG…GVFSFLDPLA (518 aa)). N63, N249, N257, N363, N401, and N406 each carry an N-linked (GlcNAc...) asparagine glycan. The cysteines at positions 75 and 323 are disulfide-linked. The L-glutamate site is built by P492, T494, and R499. Residues 537 to 557 (YEIWMCIVFAYIGVSVVLFLV) traverse the membrane as a helical segment. Topologically, residues 558–584 (SRFSPYEWHSEEFEEGRDQTTSDQSNE) are cytoplasmic. Residues 585-600 (FGIFNSLWFSLGAFMQ) constitute an intramembrane region (helical; Pore-forming). The stretch at 601 to 603 (QGC) is an intramembrane region. C603 carries S-palmitoyl cysteine lipidation. Residues 604-609 (DISPRS) are Cytoplasmic-facing. A helical membrane pass occupies residues 610–630 (LSGRIVGGVWWFFTLIIISSY). Topologically, residues 631–805 (TANLAAFLTV…DKTSALSLSN (175 aa)) are extracellular. S645 bears the Phosphoserine mark. Residues S668 and T669 each contribute to the L-glutamate site. S710 carries the phosphoserine modification. Position 719 (E719) interacts with L-glutamate. The cysteines at positions 732 and 787 are disulfide-linked. A helical membrane pass occupies residues 806 to 826 (VAGVFYILIGGLGLAMLVALI). Residues 827-906 (EFCYKSRSES…SGMPLGATGL (80 aa)) are Cytoplasmic-facing. A lipid anchor (S-palmitoyl cysteine) is attached at C829. A phosphoserine mark is found at S849 and S863. A disordered region spans residues 861–880 (RNSGAGASSGGSGENGRVVS). Positions 903–906 (ATGL) match the PDZ-binding motif.

The protein belongs to the glutamate-gated ion channel (TC 1.A.10.1) family. GRIA1 subfamily. Homotetramer or heterotetramer of pore-forming glutamate receptor subunits; heteromeric assembly can be the result of both receptor subtype and flip or flop form and according the composition, one partner can be dominant with respect to the fast desensitizing current component, whereas the other can determine the steady-state component. Tetramers may be formed by the dimerization of dimers. Found in a complex with GRIA2, GRIA3, GRIA4, CNIH2, CNIH3, CACNG2, CACNG3, CACNG4, CACNG5, CACNG7 and CACNG8. Interacts with HIP1 and RASGRF2. Interacts with SYNDIG1 and GRIA2. Interacts with DLG1 (via C-terminus). Interacts with LRFN1. Interacts with PRKG2. Interacts with CNIH2 and CACNG2. Interacts with CACNG5; this interaction modulates the gating. Interacts (via C-terminus) with PDLIM4 (via LIM domain); this interaction as well as the interaction of PDLIM4 with alpha-actinin is required for their colocalization in early endosomes. Interacts with SNX27 (via PDZ domain); the interaction is required for recycling to the plasma membrane when endocytosed and prevent degradation in lysosomes. Interacts (via PDZ-binding motif) with SHANK3 (via PDZ domain). Interacts with CACNG3; associates GRIA1 with the adapter protein complex 4 (AP-4) to target GRIA1 to the somatodendritic compartment of neurons. Interacts with CACNG2; this interaction mediates traffick to the plasma membrane and modulation of desensitization. Interacts with CNIH2 and CNIH3; this interaction promotes expression at the plasma membrane and extensively modulates their gating properties by slowing deactivation and desensitization kinetics. Found in a complex with GRIA2, GRIA3, GRIA4, DLG4, CACNG8 and CNIH2. Post-translationally, palmitoylated. Depalmitoylated by CPT1C and upon L-glutamate stimulation. ZDHHC3/GODZ specifically palmitoylates Cys-603, which leads to Golgi retention and decreased cell surface expression. In contrast, Cys-829 palmitoylation does not affect cell surface expression but regulates stimulation-dependent endocytosis. In terms of processing, phosphorylated at Ser-645. Phosphorylated at Ser-710 by PKC. Phosphorylated at Ser-849 by PKC, PKA and CAMK2. Phosphorylated at Ser-863 by PKC, PKA and PRKG2. Phosphorylation of Ser-863 is reduced by induction of long-term depression and increased by induction of long-term potentiation. In terms of tissue distribution, widely expressed in brain.

It is found in the cell membrane. It localises to the endoplasmic reticulum membrane. The protein resides in the postsynaptic cell membrane. The protein localises to the postsynaptic density membrane. Its subcellular location is the cell projection. It is found in the dendrite. It localises to the dendritic spine. The protein resides in the early endosome membrane. The protein localises to the recycling endosome membrane. Its subcellular location is the presynapse. It is found in the synapse. The catalysed reaction is Ca(2+)(in) = Ca(2+)(out). The enzyme catalyses Na(+)(in) = Na(+)(out). It carries out the reaction Mg(2+)(in) = Mg(2+)(out). It catalyses the reaction Li(+)(in) = Li(+)(out). The catalysed reaction is K(+)(in) = K(+)(out). The enzyme catalyses Sr(2+)(in) = Sr(2+)(out). Its function is as follows. Ionotropic glutamate receptor that functions as a ligand-gated cation channel, gated by L-glutamate and glutamatergic agonists such as alpha-amino-3-hydroxy-5-methyl-4-isoxazolepropionic acid (AMPA), quisqualic acid, and kainic acid. L-glutamate acts as an excitatory neurotransmitter at many synapses in the central nervous system. Binding of the excitatory neurotransmitter L-glutamate induces a conformation change, leading to the opening of the cation channel, and thereby converts the chemical signal to an electrical impulse upon entry of monovalent and divalent cations such as sodium and calcium. The receptor then desensitizes rapidly and enters in a transient inactive state, characterized by the presence of bound agonist. In the presence of CACNG2 or CACNG4 or CACNG7 or CACNG8, shows resensitization which is characterized by a delayed accumulation of current flux upon continued application of L-glutamate. Resensitization is blocked by CNIH2 through interaction with CACNG8 in the CACNG8-containing AMPA receptors complex. Calcium (Ca(2+)) permeability depends on subunits composition and, heteromeric channels containing edited GRIA2 subunit are calcium-impermeable. Also permeable to other divalents cations such as strontium(2+) and magnesium(2+) and monovalent cations such as potassium(1+) and lithium(1+). The protein is Glutamate receptor 1 of Homo sapiens (Human).